We begin with the raw amino-acid sequence, 146 residues long: Cytochrome c oxidase subunit 5A, mitochondrial (146 aa).

The N-terminal 37 residues, 1-37 (MLAAALRRCTAAAAARGLLHPVSAPSPAAAVCSIRCY), are a transit peptide targeting the mitochondrion. Positions 2-16 (LAAALRRCTAAAAAR) match the SIFI-degron motif. An N6-acetyllysine mark is found at lysine 83 and lysine 109. Phosphothreonine is present on threonine 137.

In terms of assembly, component of the cytochrome c oxidase (complex IV, CIV), a multisubunit enzyme composed of 14 subunits. The complex is composed of a catalytic core of 3 subunits MT-CO1, MT-CO2 and MT-CO3, encoded in the mitochondrial DNA, and 11 supernumerary subunits COX4I, COX5A, COX5B, COX6A, COX6B, COX6C, COX7A, COX7B, COX7C, COX8 and NDUFA4, which are encoded in the nuclear genome. The complex exists as a monomer or a dimer and forms supercomplexes (SCs) in the inner mitochondrial membrane with NADH-ubiquinone oxidoreductase (complex I, CI) and ubiquinol-cytochrome c oxidoreductase (cytochrome b-c1 complex, complex III, CIII), resulting in different assemblies (supercomplex SCI(1)III(2)IV(1) and megacomplex MCI(2)III(2)IV(2)). Interacts with AFG1L. Interacts with RAB5IF. In response to mitochondrial stress, the precursor protein is ubiquitinated by the SIFI complex in the cytoplasm before mitochondrial import, leading to its degradation. Within the SIFI complex, UBR4 initiates ubiquitin chain that are further elongated or branched by KCMF1. Expressed in the head of epididymal sperm but not in testicular sperm (at protein level).

The protein resides in the mitochondrion inner membrane. The protein operates within energy metabolism; oxidative phosphorylation. Component of the cytochrome c oxidase, the last enzyme in the mitochondrial electron transport chain which drives oxidative phosphorylation. The respiratory chain contains 3 multisubunit complexes succinate dehydrogenase (complex II, CII), ubiquinol-cytochrome c oxidoreductase (cytochrome b-c1 complex, complex III, CIII) and cytochrome c oxidase (complex IV, CIV), that cooperate to transfer electrons derived from NADH and succinate to molecular oxygen, creating an electrochemical gradient over the inner membrane that drives transmembrane transport and the ATP synthase. Cytochrome c oxidase is the component of the respiratory chain that catalyzes the reduction of oxygen to water. Electrons originating from reduced cytochrome c in the intermembrane space (IMS) are transferred via the dinuclear copper A center (CU(A)) of subunit 2 and heme A of subunit 1 to the active site in subunit 1, a binuclear center (BNC) formed by heme A3 and copper B (CU(B)). The BNC reduces molecular oxygen to 2 water molecules using 4 electrons from cytochrome c in the IMS and 4 protons from the mitochondrial matrix. In Rattus norvegicus (Rat), this protein is Cytochrome c oxidase subunit 5A, mitochondrial (Cox5a).